Here is a 461-residue protein sequence, read N- to C-terminus: Cysteine--tRNA ligase (461 aa).

Cys28 is a Zn(2+) binding site. Residues 30 to 40 (ITVYDLCHIGH) carry the 'HIGH' region motif. Zn(2+) is bound by residues Cys209, His234, and Glu238. The 'KMSKS' region signature appears at 266-270 (KMSKS). Lys269 serves as a coordination point for ATP.

Belongs to the class-I aminoacyl-tRNA synthetase family. Monomer. Zn(2+) serves as cofactor.

The protein localises to the cytoplasm. It catalyses the reaction tRNA(Cys) + L-cysteine + ATP = L-cysteinyl-tRNA(Cys) + AMP + diphosphate. The sequence is that of Cysteine--tRNA ligase from Shigella flexneri.